Reading from the N-terminus, the 134-residue chain is Small ribosomal subunit protein uS8c (134 aa).

It belongs to the universal ribosomal protein uS8 family. Part of the 30S ribosomal subunit.

The protein localises to the plastid. It localises to the chloroplast. Its function is as follows. One of the primary rRNA binding proteins, it binds directly to 16S rRNA central domain where it helps coordinate assembly of the platform of the 30S subunit. The protein is Small ribosomal subunit protein uS8c (rps8) of Panax ginseng (Korean ginseng).